The sequence spans 140 residues: Large-conductance mechanosensitive channel (140 aa).

2 helical membrane passes run 21–41 (VGVI…GDVI) and 82–102 (GSFI…FMMI).

The protein belongs to the MscL family. Homopentamer.

Its subcellular location is the cell inner membrane. Its function is as follows. Channel that opens in response to stretch forces in the membrane lipid bilayer. May participate in the regulation of osmotic pressure changes within the cell. This Leptothrix cholodnii (strain ATCC 51168 / LMG 8142 / SP-6) (Leptothrix discophora (strain SP-6)) protein is Large-conductance mechanosensitive channel.